A 251-amino-acid chain; its full sequence is ATP synthase subunit a (251 aa).

7 helical membrane passes run 28 to 48, 63 to 80, 86 to 106, 115 to 135, 154 to 176, 195 to 215, and 219 to 239; these read FTQSNEIMVLGTAIVLGIIAL, LVEISYNFIMGLCIEQIG, FFPFIFTLFFFVLMGNLLGLF, HVAVTGGLAVLVIVLVTAVAL, ALAPIIVPIEIISYLSRPVSLSI, FMFLLIGALGTFGYFAALLPM, and VTLVGFELLVAFLQAYVFAIL.

It belongs to the ATPase A chain family. As to quaternary structure, F-type ATPases have 2 components, CF(1) - the catalytic core - and CF(0) - the membrane proton channel. CF(1) has five subunits: alpha(3), beta(3), gamma(1), delta(1), epsilon(1). CF(0) has three main subunits: a(1), b(2) and c(9-12). The alpha and beta chains form an alternating ring which encloses part of the gamma chain. CF(1) is attached to CF(0) by a central stalk formed by the gamma and epsilon chains, while a peripheral stalk is formed by the delta and b chains.

It is found in the cell inner membrane. Key component of the proton channel; it plays a direct role in the translocation of protons across the membrane. The chain is ATP synthase subunit a from Granulibacter bethesdensis (strain ATCC BAA-1260 / CGDNIH1).